A 318-amino-acid polypeptide reads, in one-letter code: Small ribosomal subunit protein uS2 (318 aa).

Belongs to the universal ribosomal protein uS2 family.

This Mesomycoplasma hyopneumoniae (strain J / ATCC 25934 / NCTC 10110) (Mycoplasma hyopneumoniae) protein is Small ribosomal subunit protein uS2.